Here is a 205-residue protein sequence, read N- to C-terminus: Pre-rRNA-processing protein TSR2 (205 aa).

Positions serine 144–histidine 205 are disordered. The span at glycine 152–valine 177 shows a compositional bias: acidic residues.

Belongs to the TSR2 family. As to quaternary structure, interacts with RPS26A.

It localises to the cytoplasm. Its subcellular location is the nucleus. Its function is as follows. Required for 20S pre-rRNA processing. The polypeptide is Pre-rRNA-processing protein TSR2 (Saccharomyces cerevisiae (strain ATCC 204508 / S288c) (Baker's yeast)).